Reading from the N-terminus, the 287-residue chain is Oxaloacetate decarboxylase (287 aa).

Ser-50 contacts substrate. Residue Asp-88 coordinates Mg(2+). Residues Arg-159 and His-235 each coordinate substrate.

It belongs to the isocitrate lyase/PEP mutase superfamily. Oxaloacetate decarboxylase family. Homotetramer; dimer of dimers. It depends on Mg(2+) as a cofactor.

It catalyses the reaction oxaloacetate + H(+) = pyruvate + CO2. In terms of biological role, catalyzes the decarboxylation of oxaloacetate into pyruvate. Seems to play a role in maintaining cellular concentrations of bicarbonate and pyruvate. The protein is Oxaloacetate decarboxylase of Chromohalobacter salexigens (strain ATCC BAA-138 / DSM 3043 / CIP 106854 / NCIMB 13768 / 1H11).